A 392-amino-acid chain; its full sequence is MKWMVVALLCLPLLEAALIRVPLKKMKSIRETMKEQGVLKDFLKNHKYDPGQKYHFGKFGDYSVLYEPMAYMDASYYGEISIGTPPQNFLVLFDTGSSNLWVSSVYCQSEACTTHTRYNPSKSSTYYTQGQTFSLQYGTGSLTGFFGYDTLRVQSIQVPNQEFGLSENEPGTNFVYAQFDGIMGLAYPGLSSGGATTALQGMLGEGALSQPLFGVYLGSQQGSNGGQIVFGGVDENLYTGELTWIPVTQELYWQITIDDFLIGNQASGWCSSSGCQGIVDTGTSLLVMPAQYLNELLQTIGAQEGEYGQYFVSCDSVSSLPTLTFVLNGVQFPLSPSSYIIQEEGSCMVGLESLSLNAESGQPLWILGDVFLRSYYAVFDMGNNRVGLAPSV.

Positions 1-16 (MKWMVVALLCLPLLEA) are cleaved as a signal peptide. Residues 17–62 (ALIRVPLKKMKSIRETMKEQGVLKDFLKNHKYDPGQKYHFGKFGDY) constitute a propeptide, activation peptide. Residues 76–389 (YYGEISIGTP…DMGNNRVGLA (314 aa)) form the Peptidase A1 domain. Residue Asp-94 is part of the active site. Intrachain disulfides connect Cys-107–Cys-112 and Cys-270–Cys-275. The active site involves Asp-280. Cys-314 and Cys-347 form a disulfide bridge.

The protein belongs to the peptidase A1 family.

It is found in the secreted. It catalyses the reaction More restricted specificity than pepsin A, but shows preferential cleavage at Tyr-|-Xaa bonds. High activity on hemoglobin.. In terms of biological role, hydrolyzes a variety of proteins. This chain is Gastricsin (Pgc), found in Mus musculus (Mouse).